Here is a 470-residue protein sequence, read N- to C-terminus: 3-isopropylmalate dehydratase large subunit (470 aa).

[4Fe-4S] cluster contacts are provided by Cys348, Cys409, and Cys412.

It belongs to the aconitase/IPM isomerase family. LeuC type 1 subfamily. As to quaternary structure, heterodimer of LeuC and LeuD. [4Fe-4S] cluster is required as a cofactor.

The enzyme catalyses (2R,3S)-3-isopropylmalate = (2S)-2-isopropylmalate. The protein operates within amino-acid biosynthesis; L-leucine biosynthesis; L-leucine from 3-methyl-2-oxobutanoate: step 2/4. Its function is as follows. Catalyzes the isomerization between 2-isopropylmalate and 3-isopropylmalate, via the formation of 2-isopropylmaleate. This Acidithiobacillus ferrooxidans (strain ATCC 23270 / DSM 14882 / CIP 104768 / NCIMB 8455) (Ferrobacillus ferrooxidans (strain ATCC 23270)) protein is 3-isopropylmalate dehydratase large subunit.